The chain runs to 185 residues: Adenine phosphoribosyltransferase (185 aa).

This sequence belongs to the purine/pyrimidine phosphoribosyltransferase family. Homodimer.

It localises to the cytoplasm. The catalysed reaction is AMP + diphosphate = 5-phospho-alpha-D-ribose 1-diphosphate + adenine. Its pathway is purine metabolism; AMP biosynthesis via salvage pathway; AMP from adenine: step 1/1. Functionally, catalyzes a salvage reaction resulting in the formation of AMP, that is energically less costly than de novo synthesis. This chain is Adenine phosphoribosyltransferase, found in Pectobacterium carotovorum subsp. carotovorum (strain PC1).